Here is a 498-residue protein sequence, read N- to C-terminus: Cyclin-L1 (498 aa).

Cyclin-like stretches follow at residues 68 to 169 and 182 to 266; these read ERIQ…RILK and KIIV…NTMK. Residues 294–498 form a disordered region; the sequence is LKARGQNPNG…SGHSHSRHRR (205 aa). Polar residues predominate over residues 311 to 320; sequence NGFSPASKPS. A compositionally biased stretch (basic and acidic residues) spans 321-341; sequence SPRDVKMDDKSPNSKLKEPEN. Residues 366 to 396 form an RS region; that stretch reads KNHSRSRSRSTSRSPHRHRRSHSGTYSSHSS. The segment covering 367–387 has biased composition (basic residues); the sequence is NHSRSRSRSTSRSPHRHRRSH. Over residues 388–402 the composition is skewed to low complexity; it reads SGTYSSHSSHSPSPR. Residues Ser409 and Ser412 each carry the phosphoserine modification. Residues 415–426 are compositionally biased toward basic and acidic residues; sequence RTDRDRPSETSR. A compositionally biased stretch (basic residues) spans 427–440; sequence HSNKRRRSRSRSRS. The span at 441–478 shows a compositional bias: basic and acidic residues; the sequence is NSRERVRDRDHIKHKQERSGSGHHWDHRDRERDRSRDH. The span at 479–498 shows a compositional bias: basic residues; the sequence is GRNKRQSRSHSGHSHSRHRR.

This sequence belongs to the cyclin family. Cyclin L subfamily.

It localises to the nucleus speckle. The protein localises to the nucleus. Its subcellular location is the nucleoplasm. In terms of biological role, involved in pre-mRNA splicing. The polypeptide is Cyclin-L1 (ccnl1) (Danio rerio (Zebrafish)).